The chain runs to 201 residues: UPF0637 protein LCA_0842 (201 aa).

Belongs to the UPF0637 family.

This chain is UPF0637 protein LCA_0842, found in Latilactobacillus sakei subsp. sakei (strain 23K) (Lactobacillus sakei subsp. sakei).